Here is an 808-residue protein sequence, read N- to C-terminus: Probable E3 ubiquitin-protein ligase MARCHF10 (808 aa).

Disordered regions lie at residues 33-81 (LRRQ…LTEP), 101-268 (QTSV…RKAS), and 284-415 (SRRE…EVGV). Over residues 34–49 (RRQEYRRDPNEKKRDQ) the composition is skewed to basic and acidic residues. Over residues 237-249 (QAFQGKNSPQVLS) the composition is skewed to polar residues. Basic and acidic residues-rich tracts occupy residues 330 to 349 (KNFE…RSEP) and 379 to 397 (LPDR…ENAK). An RING-CH-type zinc finger spans residues 651-721 (DSEEEGDLCR…EMCKQGLLVD (71 aa)). Zn(2+) contacts are provided by Cys659, Cys662, Cys677, Cys679, His687, Cys690, Cys711, and Cys714. Residues 773–808 (ERERLSRNYPQPRTEENENSELGDGNEGSISQSQVV) form a disordered region.

The enzyme catalyses S-ubiquitinyl-[E2 ubiquitin-conjugating enzyme]-L-cysteine + [acceptor protein]-L-lysine = [E2 ubiquitin-conjugating enzyme]-L-cysteine + N(6)-ubiquitinyl-[acceptor protein]-L-lysine.. It participates in protein modification; protein ubiquitination. Functionally, E3 ubiquitin-protein ligase. E3 ubiquitin ligases accept ubiquitin from an E2 ubiquitin-conjugating enzyme in the form of a thioester and then directly transfer the ubiquitin to targeted substrates. This is Probable E3 ubiquitin-protein ligase MARCHF10 from Homo sapiens (Human).